Here is a 476-residue protein sequence, read N- to C-terminus: Chromosomal replication initiator protein DnaA (476 aa).

The tract at residues 1-87 (MSDRSDPTHA…AGVSNFAIVV (87 aa)) is domain I, interacts with DnaA modulators. Residues 87–131 (VNPGIAQDAFAQHPEPAEQPYIETPTITAPTDNPGLPASPSRGDS) form a domain II region. The interval 132 to 348 (RLNPKYGFDT…GTLIRVTAFA (217 aa)) is domain III, AAA+ region. ATP-binding residues include G176, G178, K179, and T180. The domain IV, binds dsDNA stretch occupies residues 349–476 (SLNKTPVDLA…IKQNHRYGKM (128 aa)).

Belongs to the DnaA family. Oligomerizes as a right-handed, spiral filament on DNA at oriC.

It is found in the cytoplasm. Functionally, plays an essential role in the initiation and regulation of chromosomal replication. ATP-DnaA binds to the origin of replication (oriC) to initiate formation of the DNA replication initiation complex once per cell cycle. Binds the DnaA box (a 9 base pair repeat at the origin) and separates the double-stranded (ds)DNA. Forms a right-handed helical filament on oriC DNA; dsDNA binds to the exterior of the filament while single-stranded (ss)DNA is stabiized in the filament's interior. The ATP-DnaA-oriC complex binds and stabilizes one strand of the AT-rich DNA unwinding element (DUE), permitting loading of DNA polymerase. After initiation quickly degrades to an ADP-DnaA complex that is not apt for DNA replication. Binds acidic phospholipids. The chain is Chromosomal replication initiator protein DnaA from Clavibacter sepedonicus (Clavibacter michiganensis subsp. sepedonicus).